A 232-amino-acid polypeptide reads, in one-letter code: Ribose-5-phosphate isomerase A (232 aa).

Substrate is bound by residues 31–34 (TGST), 88–91 (DGAD), and 101–104 (KGGG). Residue Glu-110 is the Proton acceptor of the active site. Lys-128 is a substrate binding site.

The protein belongs to the ribose 5-phosphate isomerase family. As to quaternary structure, homodimer.

The enzyme catalyses aldehydo-D-ribose 5-phosphate = D-ribulose 5-phosphate. It functions in the pathway carbohydrate degradation; pentose phosphate pathway; D-ribose 5-phosphate from D-ribulose 5-phosphate (non-oxidative stage): step 1/1. Functionally, catalyzes the reversible conversion of ribose-5-phosphate to ribulose 5-phosphate. This chain is Ribose-5-phosphate isomerase A, found in Lactobacillus gasseri (strain ATCC 33323 / DSM 20243 / BCRC 14619 / CIP 102991 / JCM 1131 / KCTC 3163 / NCIMB 11718 / NCTC 13722 / AM63).